A 494-amino-acid polypeptide reads, in one-letter code: Nuclear distribution protein PAC1 (494 aa).

The LisH domain occupies glutamine 14–arginine 46. Residues asparagine 90–leucine 123 adopt a coiled-coil conformation. WD repeat units follow at residues asparagine 153–alanine 192, serine 196–glutamine 244, glycine 251–threonine 292, proline 295–threonine 334, histidine 347–histidine 395, glycine 415–glutamate 454, and histidine 457–phenylalanine 492.

Belongs to the WD repeat LIS1/nudF family. In terms of assembly, self-associates. Interacts with NDL1 and dynein.

Its subcellular location is the cytoplasm. The protein resides in the cytoskeleton. The protein localises to the spindle pole. Positively regulates the activity of the minus-end directed microtubule motor protein dynein. Plays a central role in positioning the mitotic spindle at the bud neck during cell division. Targets cytoplasmic dynein to microtubule plus ends, thereby promoting dynein-mediated microtubule sliding along the bud cortex and consequently the movement of the mitotic spindle to the bud neck. The sequence is that of Nuclear distribution protein PAC1 from Saccharomyces cerevisiae (strain JAY291) (Baker's yeast).